The primary structure comprises 179 residues: Large ribosomal subunit protein uL6 (179 aa).

This sequence belongs to the universal ribosomal protein uL6 family. As to quaternary structure, part of the 50S ribosomal subunit.

In terms of biological role, this protein binds to the 23S rRNA, and is important in its secondary structure. It is located near the subunit interface in the base of the L7/L12 stalk, and near the tRNA binding site of the peptidyltransferase center. The chain is Large ribosomal subunit protein uL6 from Leptospira interrogans serogroup Icterohaemorrhagiae serovar copenhageni (strain Fiocruz L1-130).